The following is a 138-amino-acid chain: Single-stranded DNA-binding protein 4 (138 aa).

The SSB domain maps to 1-104 (MINNVVLIGR…VVADSFQILE (104 aa)). The tract at residues 107 to 138 (DNSTNQASMDDQLPPSFGNSQPMDISDDDLPF) is disordered. Positions 133-138 (DDDLPF) match the Important for interaction with partner proteins motif.

As to quaternary structure, homotetramer.

Functionally, plays an important role in DNA replication, recombination and repair. Binds to ssDNA and to an array of partner proteins to recruit them to their sites of action during DNA metabolism. In Streptococcus agalactiae serotype V (strain ATCC BAA-611 / 2603 V/R), this protein is Single-stranded DNA-binding protein 4 (ssb4).